Here is a 377-residue protein sequence, read N- to C-terminus: Succinyl-diaminopimelate desuccinylase (377 aa).

Residue H68 coordinates Zn(2+). Residue D70 is part of the active site. Residue D101 participates in Zn(2+) binding. The active-site Proton acceptor is the E135. Zn(2+) contacts are provided by E136, E164, and H350.

This sequence belongs to the peptidase M20A family. DapE subfamily. In terms of assembly, homodimer. Zn(2+) serves as cofactor. The cofactor is Co(2+).

The enzyme catalyses N-succinyl-(2S,6S)-2,6-diaminopimelate + H2O = (2S,6S)-2,6-diaminopimelate + succinate. Its pathway is amino-acid biosynthesis; L-lysine biosynthesis via DAP pathway; LL-2,6-diaminopimelate from (S)-tetrahydrodipicolinate (succinylase route): step 3/3. Functionally, catalyzes the hydrolysis of N-succinyl-L,L-diaminopimelic acid (SDAP), forming succinate and LL-2,6-diaminopimelate (DAP), an intermediate involved in the bacterial biosynthesis of lysine and meso-diaminopimelic acid, an essential component of bacterial cell walls. This chain is Succinyl-diaminopimelate desuccinylase, found in Aliivibrio salmonicida (strain LFI1238) (Vibrio salmonicida (strain LFI1238)).